Reading from the N-terminus, the 145-residue chain is Protein SprT-like (145 aa).

Residues 4 to 140 (TNYVQEVSLA…VCGNCHGKLM (137 aa)) enclose the SprT-like domain. A Zn(2+)-binding site is contributed by H64. Residue E65 is part of the active site. H68 is a binding site for Zn(2+).

It belongs to the SprT family. Requires Zn(2+) as cofactor.

It is found in the cytoplasm. The chain is Protein SprT-like from Streptococcus pyogenes serotype M1.